The chain runs to 458 residues: Transcription termination factor Rho (458 aa).

The disordered stretch occupies residues 1–23; the sequence is MNTTNKESTAELNNTESNNNYNN. Over residues 10–23 the composition is skewed to low complexity; the sequence is AELNNTESNNNYNN. The 76-residue stretch at 78–153 folds into the Rho RNA-BD domain; sequence LIVGEGVLEV…LKVNRVNFED (76 aa). Residues 201 to 206, 213 to 218, and Arg-244 each bind ATP; these read GKGQRA and RTGKTV.

The protein belongs to the Rho family. As to quaternary structure, homohexamer. The homohexamer assembles into an open ring structure.

Its function is as follows. Facilitates transcription termination by a mechanism that involves Rho binding to the nascent RNA, activation of Rho's RNA-dependent ATPase activity, and release of the mRNA from the DNA template. The sequence is that of Transcription termination factor Rho from Rickettsia conorii (strain ATCC VR-613 / Malish 7).